We begin with the raw amino-acid sequence, 161 residues long: Nucleotide-binding protein Bphyt_3208 (161 aa).

Belongs to the YajQ family.

Functionally, nucleotide-binding protein. The sequence is that of Nucleotide-binding protein Bphyt_3208 from Paraburkholderia phytofirmans (strain DSM 17436 / LMG 22146 / PsJN) (Burkholderia phytofirmans).